The sequence spans 329 residues: Mitochondrial nuclease (329 aa).

Residue His138 is the Proton acceptor of the active site. Asn170 is a binding site for Mg(2+).

This sequence belongs to the DNA/RNA non-specific endonuclease family. In terms of assembly, homodimer. It depends on Mn(2+) as a cofactor. Mg(2+) serves as cofactor.

Its subcellular location is the mitochondrion inner membrane. Its function is as follows. This enzyme has both RNase and DNase activity. This chain is Mitochondrial nuclease (NUC1), found in Saccharomyces cerevisiae (strain ATCC 204508 / S288c) (Baker's yeast).